Reading from the N-terminus, the 562-residue chain is Calcium-dependent protein kinase 5 (562 aa).

The Protein kinase domain occupies 118-372; sequence ELDKYKLGKG…VHKIVNHKWF (255 aa). ATP contacts are provided by residues 124-132 and lysine 147; that span reads LGKGSYGNV. Aspartate 238 serves as the catalytic Proton acceptor. The J domain autoinhibitory motif signature appears at 394-402; the sequence is KFKKFHKLC. The segment at 394–429 is j domain; sequence KFKKFHKLCKIKKLAITCIAYQLNKKKFGKMKKTFE. A J domain EF-hand interaction motif motif is present at residues 403 to 412; it reads KIKKLAITCI. EF-hand domains lie at 419–453, 454–489, 490–525, and 528–562; these read KKFGKMKKTFEAFDHNGDGVLTISEIFQCLKVGDN, EIDRDLYYLLKQLDTDGNGLIDYTEFLAACLDHSIL, EQDAVCRNAFKIFDANGDGIITKDELLNVLSFSNDQ, and FSKEIIENVIKEVDANNDGYIDYDEFYKMMSGRQS. Ca(2+) contacts are provided by aspartate 432, asparagine 434, aspartate 436, glutamate 443, aspartate 467, aspartate 469, asparagine 471, glutamate 478, aspartate 503, asparagine 505, aspartate 507, glutamate 514, aspartate 541, asparagine 543, aspartate 545, tyrosine 547, and glutamate 552.

It belongs to the protein kinase superfamily. Ser/Thr protein kinase family. CDPK subfamily. Requires Mg(2+) as cofactor. Post-translationally, may be palmitoylated. In terms of processing, autophosphorylated in vitro.

Its subcellular location is the cytoplasm. The protein resides in the cytoplasmic vesicle. It localises to the secretory vesicle. It is found in the microneme membrane. The protein localises to the cell membrane. It carries out the reaction L-seryl-[protein] + ATP = O-phospho-L-seryl-[protein] + ADP + H(+). It catalyses the reaction L-threonyl-[protein] + ATP = O-phospho-L-threonyl-[protein] + ADP + H(+). Its activity is regulated as follows. Activated by calcium. Upon calcium binding to the EF-hand domains, the C-terminus of the junction domain (J domain) undergoes a conformational change which results in the dissociation of the pseudo-substrate inhibitory motif from the catalytic domain. This, in turn, may facilitate the autophosphorylation of the activation loop at Thr-278, which leads to the kinase activation. In terms of biological role, calcium-dependent protein kinase which acts as a sensor and effector of intracellular Ca(2+) levels probably in part downstream of cGMP-activated PKG kinase. Plays a central role in host erythrocytes and hepatocytes infection cycles. During the liver stage, involved in sporozoite motility and thus in sporozoite invasion of host hepatocytes, probably together with CDPK1 and CDPK4. Involved in merosome egress from host hepatocytes, probably together with CDPK4. Required for the release of hepatic merozoites from merosomes in the host blood stream. During the asexual blood stage, required for merozoite egress from host erythrocytes by triggering microneme secretion. Phosphorylates transporter NPT1 at late schizont stage. The protein is Calcium-dependent protein kinase 5 of Plasmodium berghei (strain Anka).